The primary structure comprises 1002 residues: Glutamate receptor ionotropic, NMDA 3B (1002 aa).

Positions 1-24 are cleaved as a signal peptide; that stretch reads MESVRTLWLSVALALAVGSRVVRG. Over 25 to 574 the chain is Extracellular; it reads HPQPCRVPTR…PIGAFMWPLH (550 aa). N69, N212, N344, N451, and N465 each carry an N-linked (GlcNAc...) asparagine glycan. 2 cysteine pairs are disulfide-bonded: C439–C475 and C445–C476. Residues S531, S533, and R538 each coordinate glycine. Residues S533 and R538 each contribute to the D-serine site. A helical membrane pass occupies residues 575-594; sequence WSMWVGVFAALHLTALFLTL. Residues 595 to 615 are Cytoplasmic-facing; it reads YEWRSPYGLTPRGRNRGTVFS. Positions 616–627 form an intramembrane region, discontinuously helical; the sequence is YSSALNLCYAIL. The Cytoplasmic segment spans residues 628 to 641; the sequence is FGRTVSSKTPKCPT. A helical transmembrane segment spans residues 642–661; it reads GRFLMNLWAIFCLLVLSSYT. Residues 662-832 are Extracellular-facing; that stretch reads ANLAAVMVGD…TLQMGVYHFS (171 aa). S701 lines the glycine pocket. D-serine is bound by residues S701, A702, and D745. D745 is a binding site for glycine. A glycan (N-linked (GlcNAc...) asparagine) is linked at N786. The helical transmembrane segment at 833–848 threads the bilayer; sequence GLFVLLCLGLGSALLT. Over 849–1002 the chain is Cytoplasmic; that stretch reads SLGEHVFYRL…RLLHAAPAES (154 aa). The tract at residues 882 to 910 is disordered; that stretch reads ALNTGPPEGQQERAEQERSGPKDELPATD. Basic and acidic residues predominate over residues 891–906; that stretch reads QQERAEQERSGPKDEL. Positions 944 to 985 form a coiled coil; sequence LCSNGPGLQAELRELELRIEAARERLRSALLRRGELRALLGD. The involved in the trafficking and surface expression of NMDARs stretch occupies residues 951-984; the sequence is LQAELRELELRIEAARERLRSALLRRGELRALLG.

The protein belongs to the glutamate-gated ion channel (TC 1.A.10.1) family. NR3B/GRIN3B subfamily. As to quaternary structure, forms heterotetrameric channels that contain at least two GluN1 subunits and at least a combination of one GluN2 and one GluN3 subunits (in vitro). Forms heterotetrameric channels composed of two GluN1/zeta subunits (GRIN1), and two identical GluN3 subunits (GRIN3A or GRIN3B) (in vitro). Does not form functional homomeric channels. Expressed in the hippocampus, the corpus callosum, in the facial and trigeminal nuclei of the brainstem and the ventral horn of the spinal cord.

It localises to the cell membrane. The protein localises to the postsynaptic cell membrane. The enzyme catalyses Ca(2+)(in) = Ca(2+)(out). It catalyses the reaction Na(+)(in) = Na(+)(out). Excitatory glycine receptors are inhibited by D-serine at a concentrion of 100uM. Component of a non-conventional N-methyl-D-aspartate (NMDA) receptors (NMDARs) that function as heterotetrameric, ligand-gated cation channels with low calcium permeability and low voltage-dependent block by Mg(2+). Forms glutamatergic receptor complexes with GluN1 and GluN2 subunits which are activated by glycine binding to the GluN1 and GluN3 subunits and L-glutamate binding to GluN2 subunits. Forms excitatory glycinergic receptor complexes with GluN1 alone which are activated by glycine binding to the GluN1 and GluN3 subunits. GluN3B subunit also binds D-serine and, in the absence of glycine, activates glycinergic receptor complexes, but with lower efficacy than glycine. Each GluN3 subunit confers differential attributes to channel properties, including activation, deactivation and desensitization kinetics, pH sensitivity, Ca2(+) permeability, and binding to allosteric modulators. The sequence is that of Glutamate receptor ionotropic, NMDA 3B from Rattus norvegicus (Rat).